The following is a 481-amino-acid chain: ATP synthase subunit beta (481 aa).

Residue 167–174 (GGAGVGKT) participates in ATP binding.

This sequence belongs to the ATPase alpha/beta chains family. As to quaternary structure, F-type ATPases have 2 components, CF(1) - the catalytic core - and CF(0) - the membrane proton channel. CF(1) has five subunits: alpha(3), beta(3), gamma(1), delta(1), epsilon(1). CF(0) has three main subunits: a(1), b(2) and c(9-12). The alpha and beta chains form an alternating ring which encloses part of the gamma chain. CF(1) is attached to CF(0) by a central stalk formed by the gamma and epsilon chains, while a peripheral stalk is formed by the delta and b chains.

The protein localises to the cell membrane. The enzyme catalyses ATP + H2O + 4 H(+)(in) = ADP + phosphate + 5 H(+)(out). In terms of biological role, produces ATP from ADP in the presence of a proton gradient across the membrane. The catalytic sites are hosted primarily by the beta subunits. In Corynebacterium efficiens (strain DSM 44549 / YS-314 / AJ 12310 / JCM 11189 / NBRC 100395), this protein is ATP synthase subunit beta.